A 463-amino-acid chain; its full sequence is ATP synthase subunit beta (463 aa).

152-159 is an ATP binding site; the sequence is GGAGVGKT.

This sequence belongs to the ATPase alpha/beta chains family. F-type ATPases have 2 components, CF(1) - the catalytic core - and CF(0) - the membrane proton channel. CF(1) has five subunits: alpha(3), beta(3), gamma(1), delta(1), epsilon(1). CF(0) has three main subunits: a(1), b(2) and c(9-12). The alpha and beta chains form an alternating ring which encloses part of the gamma chain. CF(1) is attached to CF(0) by a central stalk formed by the gamma and epsilon chains, while a peripheral stalk is formed by the delta and b chains.

It is found in the cell inner membrane. The enzyme catalyses ATP + H2O + 4 H(+)(in) = ADP + phosphate + 5 H(+)(out). Its function is as follows. Produces ATP from ADP in the presence of a proton gradient across the membrane. The catalytic sites are hosted primarily by the beta subunits. The polypeptide is ATP synthase subunit beta (Shewanella oneidensis (strain ATCC 700550 / JCM 31522 / CIP 106686 / LMG 19005 / NCIMB 14063 / MR-1)).